We begin with the raw amino-acid sequence, 54 residues long: UPF0391 membrane protein msr3702 (54 aa).

Transmembrane regions (helical) follow at residues 4–24 and 30–50; these read WALV…GGIA and IAQI…LAGL.

The protein belongs to the UPF0391 family.

Its subcellular location is the cell membrane. The chain is UPF0391 membrane protein msr3702 from Mesorhizobium japonicum (strain LMG 29417 / CECT 9101 / MAFF 303099) (Mesorhizobium loti (strain MAFF 303099)).